Here is a 772-residue protein sequence, read N- to C-terminus: Probable serine/threonine-protein kinase HAL5-like (772 aa).

4 disordered regions span residues 1–102 (MASS…TRHV), 115–165 (RAGT…EPNN), 185–241 (IDTQ…RSNT), and 344–396 (NADE…SANV). The span at 9–19 (SEPRISRESSL) shows a compositional bias: basic and acidic residues. 2 stretches are compositionally biased toward low complexity: residues 20 to 33 (KRSLSISKSLKGLF) and 41 to 59 (NTGPTTAAAAAAPSSISTP). A compositionally biased stretch (basic and acidic residues) spans 66-86 (TKDKQDRLKNLAANKEKELQT). Over residues 146 to 158 (RQSSSNRSSSFSN) the composition is skewed to low complexity. A compositionally biased stretch (basic residues) spans 202-212 (RRSRSTQRKRL). One can recognise a Protein kinase domain in the interval 454–758 (GKSIGIIGQG…VDSLLKSSWM (305 aa)). Residues 460–468 (IGQGAYGVV) and lysine 498 each bind ATP. The Proton acceptor role is filled by aspartate 609.

It belongs to the protein kinase superfamily. CAMK Ser/Thr protein kinase family. NPR/HAL subfamily. HAL5 sub-subfamily.

It catalyses the reaction L-seryl-[protein] + ATP = O-phospho-L-seryl-[protein] + ADP + H(+). The catalysed reaction is L-threonyl-[protein] + ATP = O-phospho-L-threonyl-[protein] + ADP + H(+). This is Probable serine/threonine-protein kinase HAL5-like from Kluyveromyces lactis (strain ATCC 8585 / CBS 2359 / DSM 70799 / NBRC 1267 / NRRL Y-1140 / WM37) (Yeast).